A 302-amino-acid polypeptide reads, in one-letter code: Deoxyhypusine hydroxylase (302 aa).

Position 1 is an N-acetylmethionine (methionine 1). HEAT-like PBS-type repeat units follow at residues 54–80 (LKHE…VLQD), 87–113 (VRHE…YSTD), 175–201 (ERYR…GLQC), 206–232 (FRHE…TLAR), and 239–265 (VRHE…HIED). Positions 56, 89, and 90 each coordinate Fe cation. The Fe cation site is built by histidine 208, histidine 241, and glutamate 242.

Belongs to the deoxyhypusine hydroxylase family. It depends on Fe(2+) as a cofactor.

It catalyses the reaction [eIF5A protein]-deoxyhypusine + AH2 + O2 = [eIF5A protein]-hypusine + A + H2O. It functions in the pathway protein modification; eIF5A hypusination. Catalyzes the hydroxylation of the N(6)-(4-aminobutyl)-L-lysine intermediate produced by deoxyhypusine synthase/DHPS on a critical lysine of the eukaryotic translation initiation factor 5A/eIF-5A. This is the second step of the post-translational modification of that lysine into an unusual amino acid residue named hypusine. Hypusination is unique to mature eIF-5A factor and is essential for its function. The polypeptide is Deoxyhypusine hydroxylase (Mus musculus (Mouse)).